We begin with the raw amino-acid sequence, 305 residues long: Probable DNA-invertase y4cG (305 aa).

The region spanning 15 to 148 is the Resolvase/invertase-type recombinase catalytic domain; the sequence is RLIGYARVST…SGMQAAKARG (134 aa). The active-site O-(5'-phospho-DNA)-serine intermediate is the Ser-23.

This sequence belongs to the site-specific recombinase resolvase family.

This chain is Probable DNA-invertase y4cG, found in Sinorhizobium fredii (strain NBRC 101917 / NGR234).